The primary structure comprises 182 residues: Ribosome-recycling factor (182 aa).

Belongs to the RRF family.

It localises to the cytoplasm. Responsible for the release of ribosomes from messenger RNA at the termination of protein biosynthesis. May increase the efficiency of translation by recycling ribosomes from one round of translation to another. This chain is Ribosome-recycling factor, found in Synechococcus sp. (strain CC9605).